The primary structure comprises 368 residues: Ferrochelatase (368 aa).

Fe cation contacts are provided by His-209 and Glu-290. Residues 341–368 are disordered; sequence ADLGGGREATGQAAERSRQRALALGAKQ.

Belongs to the ferrochelatase family.

The protein resides in the cytoplasm. It carries out the reaction heme b + 2 H(+) = protoporphyrin IX + Fe(2+). It functions in the pathway porphyrin-containing compound metabolism; protoheme biosynthesis; protoheme from protoporphyrin-IX: step 1/1. Functionally, catalyzes the ferrous insertion into protoporphyrin IX. The sequence is that of Ferrochelatase from Nitrosococcus oceani (strain ATCC 19707 / BCRC 17464 / JCM 30415 / NCIMB 11848 / C-107).